We begin with the raw amino-acid sequence, 4293 residues long: Polycystin-1 (4293 aa).

The first 23 residues, methionine 1–alanine 23, serve as a signal peptide directing secretion. The LRRNT domain maps to glycine 24–alanine 67. Over glycine 24–asparagine 3066 the chain is Extracellular. Residues asparagine 50 and asparagine 89 are each glycosylated (N-linked (GlcNAc...) asparagine). 2 LRR repeats span residues aspartate 68–serine 91 and alanine 92–asparagine 113. 2 N-linked (GlcNAc...) asparagine glycosylation sites follow: asparagine 116 and asparagine 121. Positions asparagine 125 to glutamate 178 constitute an LRRCT domain. Residues glycine 177–alanine 271 enclose the WSC domain. N-linked (GlcNAc...) asparagine glycosylation is found at asparagine 187 and asparagine 239. A PKD 1 domain is found at serine 272 to leucine 359. Asparagine 370 carries an N-linked (GlcNAc...) asparagine glycan. In terms of domain architecture, C-type lectin spans glycine 415–glutamate 530. 2 cysteine pairs are disulfide-bonded: cysteine 436–cysteine 529 and cysteine 507–cysteine 521. The interval glycine 613–alanine 632 is disordered. A glycan (N-linked (GlcNAc...) asparagine) is linked at asparagine 627. The LDL-receptor class A; atypical domain occupies proline 633–serine 666. 2 disulfides stabilise this stretch: cysteine 635–cysteine 648 and cysteine 642–cysteine 660. Residues asparagine 662, asparagine 740, asparagine 804, asparagine 835, asparagine 848, asparagine 859, asparagine 884, asparagine 915, asparagine 998, asparagine 1004, asparagine 1028, asparagine 1084, asparagine 1096, asparagine 1107, asparagine 1172, asparagine 1188, asparagine 1234, asparagine 1263, asparagine 1330, asparagine 1342, asparagine 1376, asparagine 1444, asparagine 1449, asparagine 1468, asparagine 1535, asparagine 1548, asparagine 1557, asparagine 1643, asparagine 1657, asparagine 1706, asparagine 1730, asparagine 1788, asparagine 1831, asparagine 1863, and asparagine 1876 are each glycosylated (N-linked (GlcNAc...) asparagine). PKD domains lie at alanine 849–alanine 922, leucine 929–histidine 1014, tryptophan 1017–valine 1123, proline 1121–leucine 1209, histidine 1207–histidine 1292, leucine 1288–isoleucine 1377, asparagine 1376–threonine 1463, valine 1462–leucine 1545, glycine 1544–leucine 1629, glutamine 1630–leucine 1718, glutamate 1716–leucine 1802, isoleucine 1804–leucine 1886, asparagine 1885–leucine 1970, valine 1972–valine 2053, and isoleucine 2056–glutamate 2144. Asparagine 1987, asparagine 2046, asparagine 2070, asparagine 2121, asparagine 2244, asparagine 2349, asparagine 2391, asparagine 2408, asparagine 2414, asparagine 2563, asparagine 2640, asparagine 2713, asparagine 2749, asparagine 2813, asparagine 2836, asparagine 2873, asparagine 2948, and asparagine 2986 each carry an N-linked (GlcNAc...) asparagine glycan. An REJ domain is found at cysteine 2142–proline 2828. The GAIN-B domain occupies proline 2857–glutamine 3055. Cysteine 3007 and cysteine 3035 form a disulfide bridge. The segment at cysteine 3007–glutamine 3055 is GPS. A helical transmembrane segment spans residues tyrosine 3067–leucine 3087. The Cytoplasmic portion of the chain corresponds to arginine 3088–arginine 3269. In terms of domain architecture, PLAT spans phenylalanine 3110–glutamate 3225. A helical transmembrane segment spans residues valine 3270–tryptophan 3290. Residues tyrosine 3291–valine 3315 lie on the Extracellular side of the membrane. The helical transmembrane segment at alanine 3316–phenylalanine 3336 threads the bilayer. The Cytoplasmic segment spans residues arginine 3337–histidine 3549. Residues glycine 3550 to phenylalanine 3570 traverse the membrane as a helical segment. Residues proline 3571–proline 3572 lie on the Extracellular side of the membrane. A helical membrane pass occupies residues serine 3573 to tryptophan 3593. The Cytoplasmic portion of the chain corresponds to glutamate 3594–lysine 3655. A helical membrane pass occupies residues arginine 3656 to leucine 3676. Residues alanine 3677–leucine 3891 lie on the Extracellular side of the membrane. N-linked (GlcNAc...) asparagine glycosylation is found at asparagine 3728 and asparagine 3780. The helical transmembrane segment at leucine 3892–tryptophan 3912 threads the bilayer. Residues arginine 3913–threonine 3925 lie on the Cytoplasmic side of the membrane. The helical transmembrane segment at tryptophan 3926 to leucine 3946 threads the bilayer. Over glycine 3947 to glycine 3974 the chain is Extracellular. A helical membrane pass occupies residues serine 3975–glutamine 3995. Residues leucine 3996 to methionine 4017 lie on the Cytoplasmic side of the membrane. A helical transmembrane segment spans residues glycine 4018 to isoleucine 4038. Topologically, residues serine 4039–leucine 4080 are extracellular. Residues tryptophan 4081–tyrosine 4100 traverse the membrane as a helical segment. Over histidine 4101 to threonine 4293 the chain is Cytoplasmic. 2 disordered regions span residues proline 4150–lysine 4197 and serine 4235–threonine 4293. The span at serine 4153–serine 4172 shows a compositional bias: low complexity. The residue at position 4156 (serine 4156) is a Phosphoserine; by PRKX; in vitro. Residues glutamate 4173–threonine 4195 show a composition bias toward polar residues. Residues glutamate 4210 to histidine 4241 adopt a coiled-coil conformation. Low complexity predominate over residues glycine 4238–serine 4256. Polar residues predominate over residues serine 4265 to glycine 4276.

Belongs to the polycystin family. As to quaternary structure, component of the heterotetrameric polycystin channel complex with PKD2; the tetramer contains one PKD1 chain and three PKD2 chains. Interacts with PKD2; the interaction is required for ciliary localization. Interacts with PKD2L1. Interacts with PRKX; involved in differentiation and controlled morphogenesis of the kidney. Interacts (via extracellular domain) with WNT3A, WNT4 and WNT9B. Interacts with WNT5A, DVL1 and DVL2. Interacts with NPHP1 (via SH3 domain). Interacts with BBS1, BBS4, BBS5 and TTC8. Interacts with RGS7. Interacts (via C-terminal domain) with RABEP1; the interaction connects PKD1:PKD2 to GGA1 and ARL3 that mediate the ciliary targeting. Interacts (via the PKD repeats in the N-terminal extracellular region) with EPCIP; the interaction is not dependent on N-glycosylation of either protein. Post-translationally, N-glycosylated. After synthesis, undergoes autoproteolytic cleavage between Leu-3040 and Thr-3041 in the GPS region of the GAIN-B domain. Cleavage at the GPS region occurs through a cis-autoproteolytic mechanism involving an ester-intermediate via N-O acyl rearrangement. This process takes place in the early secretory pathway, depends on initial N-glycosylation, and requires the REJ domain. PKD1 is ubiquitously and incompletely cleaved in wild-type mice, so that uncleaved and cleaved PKD1 molecules coexist. The differential patterns of cleavage during embryonic development, as well as in adult mice, suggest different functions of uncleaved and cleaved molecules.

The protein resides in the cell membrane. Its subcellular location is the cell projection. It localises to the cilium. The protein localises to the endoplasmic reticulum. It is found in the golgi apparatus. The protein resides in the vesicle. Its subcellular location is the secreted. It localises to the extracellular exosome. In terms of biological role, component of a heteromeric calcium-permeable ion channel formed by PKD1 and PKD2 that is activated by interaction between PKD1 and a Wnt family member, such as WNT3A and WNT9B. Both PKD1 and PKD2 are required for channel activity. Involved in renal tubulogenesis. Involved in fluid-flow mechanosensation by the primary cilium in renal epithelium. Acts as a regulator of cilium length, together with PKD2. The dynamic control of cilium length is essential in the regulation of mechanotransductive signaling. The cilium length response creates a negative feedback loop whereby fluid shear-mediated deflection of the primary cilium, which decreases intracellular cAMP, leads to cilium shortening and thus decreases flow-induced signaling. May be an ion-channel regulator. Involved in adhesive protein-protein and protein-carbohydrate interactions. Likely to be involved with polycystin-1-interacting protein 1 in the detection, sequestration and exocytosis of senescent mitochondria. This chain is Polycystin-1, found in Mus musculus (Mouse).